A 220-amino-acid polypeptide reads, in one-letter code: Fructose-6-phosphate aldolase (220 aa).

Residue K85 is the Schiff-base intermediate with substrate of the active site.

Belongs to the transaldolase family. Type 3A subfamily. In terms of assembly, homodecamer.

The protein resides in the cytoplasm. The catalysed reaction is beta-D-fructose 6-phosphate = dihydroxyacetone + D-glyceraldehyde 3-phosphate. Its function is as follows. Catalyzes the reversible formation of fructose 6-phosphate from dihydroxyacetone and D-glyceraldehyde 3-phosphate via an aldolization reaction. The protein is Fructose-6-phosphate aldolase of Salmonella choleraesuis (strain SC-B67).